The sequence spans 313 residues: Beta-ketoacyl-[acyl-carrier-protein] synthase III (313 aa).

Active-site residues include C112 and H238. The tract at residues 239-243 (QANIR) is ACP-binding. Residue N268 is part of the active site.

It belongs to the thiolase-like superfamily. FabH family. In terms of assembly, homodimer.

It localises to the cytoplasm. The catalysed reaction is malonyl-[ACP] + acetyl-CoA + H(+) = 3-oxobutanoyl-[ACP] + CO2 + CoA. It functions in the pathway lipid metabolism; fatty acid biosynthesis. In terms of biological role, catalyzes the condensation reaction of fatty acid synthesis by the addition to an acyl acceptor of two carbons from malonyl-ACP. Catalyzes the first condensation reaction which initiates fatty acid synthesis and may therefore play a role in governing the total rate of fatty acid production. Possesses both acetoacetyl-ACP synthase and acetyl transacylase activities. Its substrate specificity determines the biosynthesis of branched-chain and/or straight-chain of fatty acids. The protein is Beta-ketoacyl-[acyl-carrier-protein] synthase III of Staphylococcus aureus (strain COL).